The following is a 363-amino-acid chain: Pyrimidine monooxygenase RutA (363 aa).

FMN is bound by residues 49–50, asparagine 115, glutamate 124, 140–141, and serine 190; these read IK and RY.

The protein belongs to the NtaA/SnaA/DszA monooxygenase family. RutA subfamily.

The enzyme catalyses uracil + FMNH2 + NADH + O2 = (Z)-3-ureidoacrylate + FMN + NAD(+) + H2O + H(+). The catalysed reaction is thymine + FMNH2 + NADH + O2 = (Z)-2-methylureidoacrylate + FMN + NAD(+) + H2O + H(+). Catalyzes the pyrimidine ring opening between N-3 and C-4 by an unusual flavin hydroperoxide-catalyzed mechanism, adding oxygen atoms in the process to yield ureidoacrylate peracid, that immediately reacts with FMN forming ureidoacrylate and FMN-N(5)-oxide. The FMN-N(5)-oxide reacts spontaneously with NADH to produce FMN. Requires the flavin reductase RutF to regenerate FMN in vivo. This Klebsiella pneumoniae (strain 342) protein is Pyrimidine monooxygenase RutA.